A 769-amino-acid chain; its full sequence is Protein lethal(2)denticleless (769 aa).

WD repeat units lie at residues 99–129 (CHFN…RLWE), 143–174 (GHTR…LIWD), 194–249 (GHTG…KVWD), 264–303 (RHKL…YCYN), 320–349 (NSTF…YIWN), and 362–393 (GHTV…KIWR). The interval 196–221 (TGGPGTPVSQRKQRTRTPKMAGGTTS) is disordered. Position 201 is a phosphothreonine (Thr-201). Ser-204 is modified (phosphoserine). 3 disordered regions span residues 448-467 (RLMD…TTKR), 476-562 (AGQE…HVYT), and 655-769 (SPRL…VGSD). Thr-456 carries the post-translational modification Phosphothreonine. At Ser-459 the chain carries Phosphoserine. A compositionally biased stretch (polar residues) spans 503-518 (PSSQETACRHIQLQSI). A Phosphoserine modification is found at Ser-524. Basic and acidic residues predominate over residues 524–533 (SPSKRQKENS). Positions 546-562 (STPSHSPLSENVNHVYT) are enriched in polar residues. Ser-655 carries the phosphoserine modification. The span at 657–666 (RLQSLRQSEC) shows a compositional bias: polar residues. Ser-679, Ser-691, and Ser-711 each carry phosphoserine. The span at 689–704 (AGSSSHSHSQSQPKTP) shows a compositional bias: low complexity. The span at 705–714 (TSSRRNSETT) shows a compositional bias: polar residues. The segment covering 728 to 743 (PAEETTTTNAAPSSSD) has biased composition (low complexity). Over residues 758-769 (SMRTPTTAVGSD) the composition is skewed to polar residues.

This sequence belongs to the WD repeat cdt2 family. Component of the DCX(DTL) E3 ubiquitin ligase complex, at least composed of Cul-4, pic/DDB1, l(2)dtl/CDT2 and Roc1a. Ubiquitously expressed during embryogenesis with no sign of tissue specificity in expression up to stage 17.

The protein localises to the cytoplasm. Its pathway is protein modification; protein ubiquitination. Its function is as follows. Substrate-specific adapter of a DCX (DDB1-CUL4-X-box) E3 ubiquitin-protein ligase complex required for cell cycle control. The DCX(DTL) complex, also named CRL4(CDT2) complex, mediates the polyubiquitination and subsequent degradation of E2f during S phase. E2f degradation is necessary to ensure proper development. Substrates require their interaction with PCNA for their polyubiquitination: substrates interact with PCNA via their PIP-box, leading to recruit the DCX(DTL) complex. The polypeptide is Protein lethal(2)denticleless (l(2)dtl) (Drosophila melanogaster (Fruit fly)).